We begin with the raw amino-acid sequence, 307 residues long: Aspartate carbamoyltransferase catalytic subunit (307 aa).

Residues Arg-58 and Thr-59 each contribute to the carbamoyl phosphate site. Lys-86 contributes to the L-aspartate binding site. Carbamoyl phosphate-binding residues include Arg-108, His-136, and Gln-139. Residues Arg-169 and Arg-223 each contribute to the L-aspartate site. Carbamoyl phosphate contacts are provided by Gly-264 and Pro-265.

This sequence belongs to the aspartate/ornithine carbamoyltransferase superfamily. ATCase family. Heterododecamer (2C3:3R2) of six catalytic PyrB chains organized as two trimers (C3), and six regulatory PyrI chains organized as three dimers (R2).

The enzyme catalyses carbamoyl phosphate + L-aspartate = N-carbamoyl-L-aspartate + phosphate + H(+). It participates in pyrimidine metabolism; UMP biosynthesis via de novo pathway; (S)-dihydroorotate from bicarbonate: step 2/3. Functionally, catalyzes the condensation of carbamoyl phosphate and aspartate to form carbamoyl aspartate and inorganic phosphate, the committed step in the de novo pyrimidine nucleotide biosynthesis pathway. This Syntrophus aciditrophicus (strain SB) protein is Aspartate carbamoyltransferase catalytic subunit.